We begin with the raw amino-acid sequence, 199 residues long: NAD(P)H dehydrogenase (quinone) (199 aa).

The Flavodoxin-like domain occupies M4–V190. Residues S10–M15 and T78–Y80 each bind FMN. Residue Y12 participates in NAD(+) binding. Residue W98 participates in substrate binding. Residues S113 to G119 and H134 each bind FMN. The segment at G162–D181 is disordered. A compositionally biased stretch (polar residues) spans M163–A177.

The protein belongs to the WrbA family. It depends on FMN as a cofactor.

The enzyme catalyses a quinone + NADH + H(+) = a quinol + NAD(+). The catalysed reaction is a quinone + NADPH + H(+) = a quinol + NADP(+). The polypeptide is NAD(P)H dehydrogenase (quinone) (Brucella suis (strain ATCC 23445 / NCTC 10510)).